We begin with the raw amino-acid sequence, 348 residues long: 4-hydroxy-2-oxovalerate aldolase 3 (348 aa).

One can recognise a Pyruvate carboxyltransferase domain in the interval 8-260 (ITVHDMTLRD…ETGVDVWKIQ (253 aa)). 16–17 (RD) lines the substrate pocket. Aspartate 17 contributes to the Mn(2+) binding site. Catalysis depends on histidine 20, which acts as the Proton acceptor. Substrate is bound by residues serine 170 and histidine 199. Positions 199 and 201 each coordinate Mn(2+). Tyrosine 290 lines the substrate pocket.

The protein belongs to the 4-hydroxy-2-oxovalerate aldolase family.

The enzyme catalyses (S)-4-hydroxy-2-oxopentanoate = acetaldehyde + pyruvate. The chain is 4-hydroxy-2-oxovalerate aldolase 3 from Burkholderia lata (strain ATCC 17760 / DSM 23089 / LMG 22485 / NCIMB 9086 / R18194 / 383).